The chain runs to 246 residues: Large ribosomal subunit protein uL3 (246 aa).

Residue Gln-151 is modified to N5-methylglutamine.

It belongs to the universal ribosomal protein uL3 family. Part of the 50S ribosomal subunit. Forms a cluster with proteins L14 and L19. In terms of processing, methylated by PrmB.

In terms of biological role, one of the primary rRNA binding proteins, it binds directly near the 3'-end of the 23S rRNA, where it nucleates assembly of the 50S subunit. The protein is Large ribosomal subunit protein uL3 of Bartonella quintana (strain Toulouse) (Rochalimaea quintana).